The sequence spans 3658 residues: Serine/threonine-protein kinase SMG1 (3658 aa).

Disordered stretches follow at residues 1 to 99 and 116 to 142; these read MSRR…TYGR and FTSV…MSYS. Residues 24–33 are compositionally biased toward polar residues; that stretch reads NDWQPRTDSA. Basic and acidic residues-rich tracts occupy residues 67–84 and 127–136; these read QRHD…DEKG and ATKDMRKSQE. Lys-171 carries the post-translational modification N6-acetyllysine. The 584-residue stretch at 1281–1864 folds into the FAT domain; it reads RELQKSIEVQ…LYPAIVGTIS (584 aa). The HEAT repeat unit spans residues 1815-1850; it reads APWRGIIPQLFSRLNHPEVYVRQSICNLLCRVAQDS. The interval 1896–1917 is disordered; it reads ECEGGSPPASQDSNKDEPKSGL. The region spanning 2122-2461 is the PI3K/PI4K catalytic domain; that stretch reads VGGTITILPT…MEREITRSLF (340 aa). The segment at 2128–2134 is G-loop; the sequence is ILPTKTK. A catalytic loop region spans residues 2330 to 2338; the sequence is GLGDRHLDN. Positions 2350–2374 are activation loop; the sequence is HIDYNVCFEKGKSLRVPEKVPFRMT. A Phosphothreonine modification is found at Thr-3547. Ser-3553 and Ser-3567 each carry phosphoserine. Residues 3565–3576 are compositionally biased toward polar residues; that stretch reads ATSADTPPSTIP. Residues 3565–3588 form a disordered region; the sequence is ATSADTPPSTIPGTGKSIACSPKK. Phosphothreonine occurs at positions 3570 and 3574. The FATC domain maps to 3626–3658; sequence RRMSVAEQVDYVIKEATNLDNLAQLYEGWTAWV.

This sequence belongs to the PI3/PI4-kinase family. As to quaternary structure, component of the SMG1C complex composed of SMG1, SMG8 and SMG9; the recruitment of SMG8 to SMG1 N-terminus induces a large conformational change in the SMG1 C-terminal head domain containing the catalytic domain. Component of the transient SURF (SMG1-UPF1-eRF1-eRF3) complex. Part of a complex composed of SMG1, DHX34 and UPF1; within the complex DHX34 acts as a scaffolding protein to facilitate SMG1 phosphorylation of UPF1. Interacts with PRKCI. Interacts with TELO2 and TTI1. Interacts with RUVBL1 and RUVBL2. Interacts with DHX34 (via C-terminus); the interaction is RNA-independent. Requires Mn(2+) as cofactor. In terms of processing, autophosphorylated.

Its subcellular location is the nucleus. The protein localises to the cytoplasm. It catalyses the reaction L-seryl-[protein] + ATP = O-phospho-L-seryl-[protein] + ADP + H(+). The enzyme catalyses L-threonyl-[protein] + ATP = O-phospho-L-threonyl-[protein] + ADP + H(+). With respect to regulation, inhibited by caffeine, LY294002 and wortmannin. Serine/threonine protein kinase involved in both mRNA surveillance and genotoxic stress response pathways. Recognizes the substrate consensus sequence [ST]-Q. Plays a central role in nonsense-mediated decay (NMD) of mRNAs containing premature stop codons by phosphorylating UPF1/RENT1. Recruited by release factors to stalled ribosomes together with SMG8 and SMG9 (forming the SMG1C protein kinase complex), and UPF1 to form the transient SURF (SMG1-UPF1-eRF1-eRF3) complex. In EJC-dependent NMD, the SURF complex associates with the exon junction complex (EJC) through UPF2 and allows the formation of an UPF1-UPF2-UPF3 surveillance complex which is believed to activate NMD. Also acts as a genotoxic stress-activated protein kinase that displays some functional overlap with ATM. Can phosphorylate p53/TP53 and is required for optimal p53/TP53 activation after cellular exposure to genotoxic stress. Its depletion leads to spontaneous DNA damage and increased sensitivity to ionizing radiation (IR). May activate PRKCI but not PRKCZ. The protein is Serine/threonine-protein kinase SMG1 of Mus musculus (Mouse).